A 756-amino-acid chain; its full sequence is Photosystem I P700 chlorophyll a apoprotein A1 (756 aa).

A run of 8 helical transmembrane segments spans residues 73-96, 159-182, 198-222, 298-316, 353-376, 392-418, 440-462, and 537-555; these read IFSA…FHGA, LYVT…FHYH, MNHH…HVSL, TAHH…GHMY, WHAQ…HHMY, LSLF…IYMV, AIIS…LYIH, and FLVH…LILL. The [4Fe-4S] cluster site is built by C579 and C588. The next 2 membrane-spanning stretches (helical) occupy residues 595–616 and 670–692; these read HVFL…HFSW and LSAY…MFLF. H681 contributes to the chlorophyll a' binding site. Residues M689 and Y697 each coordinate chlorophyll a. W698 lines the phylloquinone pocket. Residues 730 to 750 traverse the membrane as a helical segment; the sequence is AVGVAHYLLGGIATTWAFFLA.

Belongs to the PsaA/PsaB family. As to quaternary structure, the PsaA/B heterodimer binds the P700 chlorophyll special pair and subsequent electron acceptors. PSI consists of a core antenna complex that captures photons, and an electron transfer chain that converts photonic excitation into a charge separation. The cyanobacterial PSI reaction center is composed of one copy each of PsaA,B,C,D,E,F,I,J,K,L,M and X, and forms trimeric complexes. It depends on PSI electron transfer chain: 5 chlorophyll a, 1 chlorophyll a', 2 phylloquinones and 3 4Fe-4S clusters. PSI core antenna: 90 chlorophyll a, 22 carotenoids, 3 phospholipids and 1 galactolipid. P700 is a chlorophyll a/chlorophyll a' dimer, A0 is one or more chlorophyll a, A1 is one or both phylloquinones and FX is a shared 4Fe-4S iron-sulfur center. as a cofactor.

The protein resides in the cellular thylakoid membrane. It carries out the reaction reduced [plastocyanin] + hnu + oxidized [2Fe-2S]-[ferredoxin] = oxidized [plastocyanin] + reduced [2Fe-2S]-[ferredoxin]. Its function is as follows. PsaA and PsaB bind P700, the primary electron donor of photosystem I (PSI), as well as the electron acceptors A0, A1 and FX. PSI is a plastocyanin/cytochrome c6-ferredoxin oxidoreductase, converting photonic excitation into a charge separation, which transfers an electron from the donor P700 chlorophyll pair to the spectroscopically characterized acceptors A0, A1, FX, FA and FB in turn. Oxidized P700 is reduced on the lumenal side of the thylakoid membrane by plastocyanin or cytochrome c6. This is Photosystem I P700 chlorophyll a apoprotein A1 from Cyanothece sp. (strain PCC 7425 / ATCC 29141).